The sequence spans 572 residues: Putative two-component response regulator ARR13 (572 aa).

The Response regulatory domain occupies 17–134 (NVMVVDDNRV…DLPKIYQFAL (118 aa)). At aspartate 71 the chain carries 4-aspartylphosphate. A disordered region spans residues 175–225 (KKNCSSKSDTRTVNSTNVSHVSTNGSRKNRKRKPKGGPSDDGESLSQPPKK). The span at 179–197 (SSKSDTRTVNSTNVSHVST) shows a compositional bias: polar residues. Positions 224-227 (KKKK) match the Nuclear localization signal motif. A DNA-binding region (myb-like GARP) is located at residues 227–277 (KIWWTNPLQDLFLQAIQHIGYDKVVPKKILAIMNVPYLTRENVASHLQKYR). The span at 509 to 522 (NQDQSNGESSNTIA) shows a compositional bias: polar residues. The interval 509-531 (NQDQSNGESSNTIATPETNTPNF) is disordered.

Belongs to the ARR family. Type-B subfamily. As to quaternary structure, binds the target DNA as a monomer. Two-component system major event consists of a His-to-Asp phosphorelay between a sensor histidine kinase (HK) and a response regulator (RR). In plants, the His-to-Asp phosphorelay involves an additional intermediate named Histidine-containing phosphotransfer protein (HPt). This multistep phosphorelay consists of a His-Asp-His-Asp sequential transfer of a phosphate group between first a His and an Asp of the HK protein, followed by the transfer to a conserved His of the HPt protein and finally the transfer to an Asp in the receiver domain of the RR protein.

The protein resides in the nucleus. Putative transcriptional activator that binds specifically to the DNA sequence 5'-[AG]GATT-3'. Functions as a response regulator involved in His-to-Asp phosphorelay signal transduction system. Phosphorylation of the Asp residue in the receiver domain activates the ability of the protein to promote the transcription of target genes. Could directly activate some type-A response regulators in response to cytokinins. This Arabidopsis thaliana (Mouse-ear cress) protein is Putative two-component response regulator ARR13 (ARR13).